The sequence spans 295 residues: Ribosomal protein L11 methyltransferase (295 aa).

S-adenosyl-L-methionine contacts are provided by Thr146, Gly167, Asp189, and Asn231.

Belongs to the methyltransferase superfamily. PrmA family.

It is found in the cytoplasm. The enzyme catalyses L-lysyl-[protein] + 3 S-adenosyl-L-methionine = N(6),N(6),N(6)-trimethyl-L-lysyl-[protein] + 3 S-adenosyl-L-homocysteine + 3 H(+). Its function is as follows. Methylates ribosomal protein L11. This chain is Ribosomal protein L11 methyltransferase, found in Vibrio cholerae serotype O1 (strain M66-2).